Here is an 873-residue protein sequence, read N- to C-terminus: Alanine--tRNA ligase (873 aa).

Zn(2+) contacts are provided by H562, H566, C666, and H670.

It belongs to the class-II aminoacyl-tRNA synthetase family. Zn(2+) serves as cofactor.

It localises to the cytoplasm. The enzyme catalyses tRNA(Ala) + L-alanine + ATP = L-alanyl-tRNA(Ala) + AMP + diphosphate. Catalyzes the attachment of alanine to tRNA(Ala) in a two-step reaction: alanine is first activated by ATP to form Ala-AMP and then transferred to the acceptor end of tRNA(Ala). Also edits incorrectly charged Ser-tRNA(Ala) and Gly-tRNA(Ala) via its editing domain. This Dichelobacter nodosus (strain VCS1703A) protein is Alanine--tRNA ligase.